Reading from the N-terminus, the 483-residue chain is NADH-quinone oxidoreductase subunit N (483 aa).

The next 14 membrane-spanning stretches (helical) occupy residues 13–33 (ALPE…DAAV), 39–57 (YLAY…FLTV), 76–96 (PLSD…LVYS), 110–130 (FFVL…ASHF), 131–151 (LTLY…VALQ), 165–185 (FVLG…VYGV), 206–226 (IPLV…LGAV), 240–260 (PTAM…AFVV), 277–297 (MLVI…IAQS), 302–322 (MFAY…LAGS), 330–350 (MFYV…ILLL), 373–393 (LAFV…TVGF), 406–426 (IGYV…AFYY), and 459–479 (LAVL…VQAI).

This sequence belongs to the complex I subunit 2 family. NDH-1 is composed of 14 different subunits. Subunits NuoA, H, J, K, L, M, N constitute the membrane sector of the complex.

Its subcellular location is the cell inner membrane. It carries out the reaction a quinone + NADH + 5 H(+)(in) = a quinol + NAD(+) + 4 H(+)(out). NDH-1 shuttles electrons from NADH, via FMN and iron-sulfur (Fe-S) centers, to quinones in the respiratory chain. The immediate electron acceptor for the enzyme in this species is believed to be ubiquinone. Couples the redox reaction to proton translocation (for every two electrons transferred, four hydrogen ions are translocated across the cytoplasmic membrane), and thus conserves the redox energy in a proton gradient. The sequence is that of NADH-quinone oxidoreductase subunit N from Thiobacillus denitrificans (strain ATCC 25259 / T1).